We begin with the raw amino-acid sequence, 90 residues long: Bombyxin B-6 (90 aa).

The signal sequence occupies residues 1–20; that stretch reads MMKTSVMFMLVVVISLMCSS. Intrachain disulfides connect Cys-30/Cys-76, Cys-42/Cys-89, and Cys-75/Cys-80. The propeptide at 49–67 is c peptide like; the sequence is GVAQYAPYFWTRQYLGSRG.

This sequence belongs to the insulin family. In terms of assembly, heterodimer of a B chain and an A chain linked by two disulfide bonds.

The protein resides in the secreted. Brain peptide responsible for activation of prothoracic glands to produce ecdysone in insects. This chain is Bombyxin B-6 (BBXB6), found in Bombyx mori (Silk moth).